The following is a 2211-amino-acid chain: Norsolorinic acid synthase stcA (2211 aa).

The interval 11-251 (FLFGDQTYDF…REIPIYVPAH (241 aa)) is starter unit:ACP transacylase (SAT) domain. The segment at 358 to 378 (PAEPPTSINKTPERYSHRPGS) is disordered. Positions 368–378 (TPERYSHRPGS) are enriched in basic and acidic residues. The Ketosynthase family 3 (KS3) domain maps to 380-812 (RGKLAIVSMS…GGNTAVLVED (433 aa)). Residues Cys-552, His-687, and His-730 each act as for beta-ketoacyl synthase activity in the active site. Residues 912–1201 (IACSGQGSQY…MAGMIKTTLD (290 aa)) form a malonyl-CoA:ACP transacylase (MAT) domain region. Catalysis depends on Ser-1004, which acts as the For acyl/malonyl transferase activity. Positions 1289 to 1316 (TATSDYQLPSDEQVAAKRPSKQDESKEA) are disordered. The tract at residues 1327-1468 (HRVVEEKTEP…CTVRFTSEAQ (142 aa)) is N-terminal hotdog fold. A PKS/mFAS DH domain is found at 1327–1643 (HRVVEEKTEP…LRRVPRRGLR (317 aa)). The segment at 1340 to 1643 (TLVVETDISR…LRRVPRRGLR (304 aa)) is product template (PT) domain. The active-site Proton acceptor; for dehydratase activity is the His-1359. The C-terminal hotdog fold stretch occupies residues 1495-1643 (FIRYTTKSGY…LRRVPRRGLR (149 aa)). Asp-1555 functions as the Proton donor; for dehydratase activity in the catalytic mechanism. The tract at residues 1655 to 1706 (RLHGNQQAVKTQAPQRAALKQKPQSSPTQPHASKVAYSRSATSPTAGKPVVA) is disordered. Polar residues-rich tracts occupy residues 1658-1668 (GNQQAVKTQAP) and 1676-1685 (KPQSSPTQPH). Carrier domains follow at residues 1712-1791 (REGD…SGSA) and 1839-1915 (DELF…GTTS). O-(pantetheine 4'-phosphoryl)serine is present on residues Ser-1749 and Ser-1873. The span at 1912–1926 (GTTSGSTTGSSGSGS) shows a compositional bias: low complexity. The tract at residues 1912-1947 (GTTSGSTTGSSGSGSSEDETDSIPSTPEEYTTADTR) is disordered. Polar residues predominate over residues 1934 to 1945 (IPSTPEEYTTAD). Residues 1969 to 2205 (ILFMLPDGGG…KEHVYLVREL (237 aa)) form a thioesterase/Claisen cyclase (TE/CLC) domain region. Ser-2039 serves as the catalytic For thioesterase activity.

Pantetheine 4'-phosphate serves as cofactor.

The catalysed reaction is hexanoyl-[ACP] + 7 malonyl-CoA + 6 H(+) = noranthrone + holo-[ACP] + 7 CO2 + 7 CoA + 2 H2O. The protein operates within mycotoxin biosynthesis; sterigmatocystin biosynthesis. Its function is as follows. Non-reducing polyketide synthase; part of the gene cluster that mediates the biosynthesis of sterigmatocystin (ST), a polyketide-derived furanocoumarin which is part of the most toxic and carcinogenic compounds among the known mycotoxins. The first step in the biosynthesis of sterigmatocystin is the production of hexanoate by the fatty acid synthase (FAS) units stcJ and stcK. The polyketide backbone is assembled by the non-reducing polyketide synthase stcA by condensation of the starter hexanoyl-CoA and 7 malonyl-CoA extender units followed by cyclization and release of norsolorinic acid. Norsolorinic acid is the first stable intermediate in the biosynthesis of sterigmatocystin and is converted into averantin (AVN) by the ketoreductase stcE which reduces the hexanoate ketone to an alcohol. Averantin is then oxidized into 5'-hydroxyaverantin (HAVN) by the cytochrome P450 monooxygenase stcF. 5'-hydroxyaverantin is further converted to 5'-oxyaverantin (OAVN) by the 5'-hydroxyaverantin dehydrogenase stcG. The next step is the conversion of OAVN into averufin (AVF) which is catalyzed by a yet to be identified enzyme. The cytochrome P450 monooxygenase stcB and the flavin-binding monooxygenase stcW are both required for the conversion of averufin to 1-hydroxyversicolorone. The esterase stcI probably catalyzes the formation of versiconal hemiacetal acetate from 1-hydroxyversicolorone. The oxydoreductase stcN then probably catalyzes the biosynthetic step from versiconal to versicolorin B (VERB). The next step is performed by the versicolorin B desaturase stcL to produce versicolorin A (VERA). The ketoreductase stcU and the cytochrome P450 monooxygenase stcS are involved in the conversion of versicolorin A to demethylsterigmatocystin. The Baeyer-Villiger oxidas stcQ and the reductase stcR might be involved in the biosynthetic step from versicolorin A to demethylsterigmatocystin. The final step in the biosynthesis of sterigmatocystin is the methylation of demethylsterigmatocystin catalyzed by the methyltransferase stcP. The sequence is that of Norsolorinic acid synthase stcA from Emericella nidulans (strain FGSC A4 / ATCC 38163 / CBS 112.46 / NRRL 194 / M139) (Aspergillus nidulans).